A 113-amino-acid polypeptide reads, in one-letter code: Hydrogenase maturation factor HybF (113 aa).

Residues H2 and E3 each coordinate Ni(2+). Residues C73, C76, C89, and C92 each coordinate Zn(2+).

The protein belongs to the HypA/HybF family. HybF subfamily.

Involved in the maturation of [NiFe] hydrogenases. Required for nickel insertion into the metal center of the hydrogenase. This Morganella morganii (Proteus morganii) protein is Hydrogenase maturation factor HybF.